A 464-amino-acid chain; its full sequence is GPI mannosyltransferase 2 (464 aa).

Residues 1-70 (MYYIGHPSYY…MTRSGYNYFK (70 aa)) lie on the Cytoplasmic side of the membrane. Residues 71 to 91 (GICVCTFLLSTILYLGIAVIM) form a helical membrane-spanning segment. Topologically, residues 92-166 (SHLCVFDDTA…ISFLAFRSKD (75 aa)) are lumenal. N-linked (GlcNAc...) asparagine glycosylation is found at Asn-108 and Asn-139. Residues 167–187 (VVLLGIVSCFASIFFHAIACY) form a helical membrane-spanning segment. Residues 188 to 219 (ALYLLTKSIFSNQKMTAYTVIFYCFSPSGIYM) are Cytoplasmic-facing. Residues 220–240 (SVGYTESLFAAFSFLGLLLFI) form a helical membrane-spanning segment. Residues 241-260 (KKQQYPAAFLWSLATLIRSN) lie on the Lumenal side of the membrane. Residues 261–281 (GIFWCIFFGMPAIGTLKISLE) form a helical membrane-spanning segment. The Cytoplasmic portion of the chain corresponds to 282–289 (RLQLTFMQ). Residues 290 to 309 (VSQLVGYGTKCLIILVPFFY) traverse the membrane as a helical segment. Topologically, residues 310–356 (NQYLGFKLFCPGVAWCNKSLPLIYPAVQEKYWNVGFLRYWTLNNIPN) are lumenal. N-linked (GlcNAc...) asparagine glycosylation is present at Asn-326. The helical transmembrane segment at 357–377 (FLFALLSIIPILFALFYSISG) threads the bilayer. Topologically, residues 378-388 (STLHSFRSIKS) are cytoplasmic. Residues 389 to 409 (HLVLSALYLYIGCFHMHTQVL) form a helical membrane-spanning segment. Residues 410–440 (NRMSSALPLLYWSMAHATLYAKSRNLKAFGH) lie on the Lumenal side of the membrane. The helical transmembrane segment at 441-461 (CILFVWIVYTVIQAGLYGSFL) threads the bilayer. The Cytoplasmic portion of the chain corresponds to 462-464 (PPA).

Belongs to the PIGV family. Part of the GPI mannosyltransferase 2 complex composed of gpi18 and C167.09.

Its subcellular location is the endoplasmic reticulum membrane. Its pathway is glycolipid biosynthesis; glycosylphosphatidylinositol-anchor biosynthesis. Functionally, mannosyltransferase involved in glycosylphosphatidylinositol-anchor biosynthesis. Responsible for the transfer of the second mannose to the glycosylphosphatidylinositol during GPI precursor assembly. The polypeptide is GPI mannosyltransferase 2 (gpi18) (Schizosaccharomyces pombe (strain 972 / ATCC 24843) (Fission yeast)).